Here is a 546-residue protein sequence, read N- to C-terminus: Chaperonin GroEL 2 (546 aa).

ATP-binding positions include 30–33 (TLGP), lysine 51, 87–91 (DGTTT), glycine 415, and aspartate 496.

This sequence belongs to the chaperonin (HSP60) family. Forms a cylinder of 14 subunits composed of two heptameric rings stacked back-to-back. Interacts with the co-chaperonin GroES.

It localises to the cytoplasm. It carries out the reaction ATP + H2O + a folded polypeptide = ADP + phosphate + an unfolded polypeptide.. Together with its co-chaperonin GroES, plays an essential role in assisting protein folding. The GroEL-GroES system forms a nano-cage that allows encapsulation of the non-native substrate proteins and provides a physical environment optimized to promote and accelerate protein folding. This Bradyrhizobium sp. (strain ORS 278) protein is Chaperonin GroEL 2.